The chain runs to 884 residues: Alanine--tRNA ligase (884 aa).

Zn(2+) is bound by residues His562, His566, Cys676, and His680.

Belongs to the class-II aminoacyl-tRNA synthetase family. Zn(2+) is required as a cofactor.

It localises to the cytoplasm. The catalysed reaction is tRNA(Ala) + L-alanine + ATP = L-alanyl-tRNA(Ala) + AMP + diphosphate. Its function is as follows. Catalyzes the attachment of alanine to tRNA(Ala) in a two-step reaction: alanine is first activated by ATP to form Ala-AMP and then transferred to the acceptor end of tRNA(Ala). Also edits incorrectly charged Ser-tRNA(Ala) and Gly-tRNA(Ala) via its editing domain. The protein is Alanine--tRNA ligase of Jannaschia sp. (strain CCS1).